Here is a 40-residue protein sequence, read N- to C-terminus: Submaxillary gland androgen-regulated protein 2, isoform epsilon (40 aa).

Residues 1–20 form the signal peptide; sequence MKALYMVFVLWVLIGCFLRC.

The protein localises to the secreted. Functionally, may play a role in protection or detoxification. The sequence is that of Submaxillary gland androgen-regulated protein 2, isoform epsilon (Smr2) from Mus musculus (Mouse).